The chain runs to 314 residues: tRNA uridine(34) hydroxylase (314 aa).

The Rhodanese domain maps to 135 to 229; it reads ADPETLVIDT…YLEQIPAEES (95 aa). Residue Cys-189 is the Cysteine persulfide intermediate of the active site.

This sequence belongs to the TrhO family.

It catalyses the reaction uridine(34) in tRNA + AH2 + O2 = 5-hydroxyuridine(34) in tRNA + A + H2O. Its function is as follows. Catalyzes oxygen-dependent 5-hydroxyuridine (ho5U) modification at position 34 in tRNAs. The chain is tRNA uridine(34) hydroxylase from Sinorhizobium fredii (strain NBRC 101917 / NGR234).